The primary structure comprises 369 residues: Anhydro-N-acetylmuramic acid kinase (369 aa).

Residue 12–19 participates in ATP binding; that stretch reads GTSLDGVD.

Belongs to the anhydro-N-acetylmuramic acid kinase family.

It carries out the reaction 1,6-anhydro-N-acetyl-beta-muramate + ATP + H2O = N-acetyl-D-muramate 6-phosphate + ADP + H(+). It participates in amino-sugar metabolism; 1,6-anhydro-N-acetylmuramate degradation. It functions in the pathway cell wall biogenesis; peptidoglycan recycling. Catalyzes the specific phosphorylation of 1,6-anhydro-N-acetylmuramic acid (anhMurNAc) with the simultaneous cleavage of the 1,6-anhydro ring, generating MurNAc-6-P. Is required for the utilization of anhMurNAc either imported from the medium or derived from its own cell wall murein, and thus plays a role in cell wall recycling. This is Anhydro-N-acetylmuramic acid kinase from Escherichia coli O7:K1 (strain IAI39 / ExPEC).